We begin with the raw amino-acid sequence, 344 residues long: Ribosomal RNA large subunit methyltransferase Cfr (344 aa).

The active-site Proton acceptor is the glutamate 90. A Radical SAM core domain is found at 97 to 330 (KQGWESFCIS…ATVRTQFGSE (234 aa)). Cysteine 104 and cysteine 335 are joined by a disulfide. [4Fe-4S] cluster-binding residues include cysteine 111, cysteine 115, and cysteine 118. S-adenosyl-L-methionine contacts are provided by residues 157–158 (GE), serine 188, 211–213 (SLH), and asparagine 292. Catalysis depends on cysteine 335, which acts as the S-methylcysteine intermediate.

Belongs to the radical SAM superfamily. RlmN family. Cfr subfamily. [4Fe-4S] cluster is required as a cofactor.

The protein resides in the cytoplasm. It carries out the reaction adenosine(2503) in 23S rRNA + 2 reduced [2Fe-2S]-[ferredoxin] + 2 S-adenosyl-L-methionine = 8-methyladenosine(2503) in 23S rRNA + 5'-deoxyadenosine + L-methionine + 2 oxidized [2Fe-2S]-[ferredoxin] + S-adenosyl-L-homocysteine. In terms of biological role, specifically methylates position 8 of adenine 2503 in 23S rRNA. Confers resistance to some classes of antibiotics. The protein is Ribosomal RNA large subunit methyltransferase Cfr of Clostridium botulinum (strain Langeland / NCTC 10281 / Type F).